A 474-amino-acid chain; its full sequence is Glutamate--tRNA ligase (474 aa).

A 'HIGH' region motif is present at residues Pro9 to Gly19. Positions Lys240–Arg244 match the 'KMSKS' region motif. Lys243 is an ATP binding site.

The protein belongs to the class-I aminoacyl-tRNA synthetase family. Glutamate--tRNA ligase type 1 subfamily. Monomer.

It localises to the cytoplasm. The enzyme catalyses tRNA(Glu) + L-glutamate + ATP = L-glutamyl-tRNA(Glu) + AMP + diphosphate. In terms of biological role, catalyzes the attachment of glutamate to tRNA(Glu) in a two-step reaction: glutamate is first activated by ATP to form Glu-AMP and then transferred to the acceptor end of tRNA(Glu). The chain is Glutamate--tRNA ligase from Vibrio parahaemolyticus serotype O3:K6 (strain RIMD 2210633).